A 305-amino-acid chain; its full sequence is MFADITTKLKSQMPELRGRMLANEPLAPLTWFRVGGPAQVLFTPADENDLAYFLRHLPEEIPIYCIGVGSNLIVRDRGLPGVVIRLAPRGFGEVTTDGDTVHAGAAALDKRVAEAAAAADIGGLEFYFGIPGTIGGALRMNAGANGSETKDVLVEARAVSRRGDKITVDNAGMKFEYRNSAIYPSVIFTGGTFRGRRAEPEAIRARMNEVQSHRETVQPIREKTGGSTFKNPPGQSAWKLIDAAGMRGHRVGGAQVSEMHCNFLINTGEATARDIETLGETVRARVKEHAGVDLQWEIKRIGLEA.

The region spanning 33–198 is the FAD-binding PCMH-type domain; the sequence is RVGGPAQVLF…TGGTFRGRRA (166 aa). Arg178 is an active-site residue. Ser227 functions as the Proton donor in the catalytic mechanism. Residue Glu297 is part of the active site.

Belongs to the MurB family. Requires FAD as cofactor.

The protein resides in the cytoplasm. The enzyme catalyses UDP-N-acetyl-alpha-D-muramate + NADP(+) = UDP-N-acetyl-3-O-(1-carboxyvinyl)-alpha-D-glucosamine + NADPH + H(+). Its pathway is cell wall biogenesis; peptidoglycan biosynthesis. Its function is as follows. Cell wall formation. This Nitrobacter hamburgensis (strain DSM 10229 / NCIMB 13809 / X14) protein is UDP-N-acetylenolpyruvoylglucosamine reductase.